Reading from the N-terminus, the 245-residue chain is Uridylate kinase (245 aa).

12–15 serves as a coordination point for ATP; the sequence is KISG. Gly-55 contributes to the UMP binding site. Residues Gly-56 and Arg-60 each contribute to the ATP site. UMP is bound by residues Asp-76 and 137–144; that span reads AGAPYLTT. ATP-binding residues include Thr-164, Tyr-171, and Asp-174.

This sequence belongs to the UMP kinase family. Homohexamer.

The protein resides in the cytoplasm. It carries out the reaction UMP + ATP = UDP + ADP. It functions in the pathway pyrimidine metabolism; CTP biosynthesis via de novo pathway; UDP from UMP (UMPK route): step 1/1. With respect to regulation, inhibited by UTP. In terms of biological role, catalyzes the reversible phosphorylation of UMP to UDP. The polypeptide is Uridylate kinase (Chlamydia trachomatis serovar A (strain ATCC VR-571B / DSM 19440 / HAR-13)).